The sequence spans 153 residues: Endoribonuclease YbeY (153 aa).

The Zn(2+) site is built by histidine 116, histidine 120, and histidine 126.

This sequence belongs to the endoribonuclease YbeY family. Zn(2+) serves as cofactor.

It is found in the cytoplasm. Functionally, single strand-specific metallo-endoribonuclease involved in late-stage 70S ribosome quality control and in maturation of the 3' terminus of the 16S rRNA. The polypeptide is Endoribonuclease YbeY (Paraburkholderia phytofirmans (strain DSM 17436 / LMG 22146 / PsJN) (Burkholderia phytofirmans)).